Reading from the N-terminus, the 221-residue chain is Pre-hexon-linking protein VIII (221 aa).

The residue at position 65 (Thr-65) is a Phosphothreonine; by host. Positions 113 to 150 (AAPWSGVKTGSFCGRGLQLAEPPTTAIYPSGLFHLGRG) are excised as a propeptide.

This sequence belongs to the adenoviridae hexon-linking protein family. As to quaternary structure, interacts with the peripentonal hexons as well as the hexons in the facets. Part of a complex composed of the core-capsid bridging protein, the endosome lysis protein VI and the hexon-linking protein VIII; these interactions bridge the virus core to the capsid. In terms of processing, cleaved by the viral protease during virion maturation. May cause the middle segment to be shed from the capsid.

It is found in the virion. Its subcellular location is the host nucleus. Its function is as follows. Structural component of the virion that acts as a cement protein on the capsid interior and which glue the peripentonal hexons and group-of-nine hexons together. The polypeptide is Pre-hexon-linking protein VIII (Sus scrofa (Pig)).